The sequence spans 186 residues: Akirin-1 (186 aa).

A disordered region spans residues methionine 1–arginine 64. The Nuclear localization signal signature appears at proline 22–cysteine 27. The segment covering glutamine 49–glycine 60 has biased composition (low complexity). The short motif at serine 183–serine 186 is the SYVS motif element.

It belongs to the akirin family.

It localises to the nucleus. Functionally, molecular adapter that acts as a bridge between proteins, and which is involved skeletal muscle development. Functions as a signal transducer for MSTN during skeletal muscle regeneration and myogenesis. The polypeptide is Akirin-1 (Xenopus tropicalis (Western clawed frog)).